A 9439-amino-acid polypeptide reads, in one-letter code: Extracellular matrix-binding protein ebh (9439 aa).

29 consecutive FIVAR domains span residues 1815–1871 (ARRR…VNSA), 1901–1957 (AKEQ…INDA), 1985–2041 (AYDT…VRDA), 2071–2127 (AKKR…ITSE), 2155–2211 (AYNK…VTQA), 2241–2297 (AKNR…ISSE), 2325–2381 (AYNK…VEDA), 2411–2467 (AKEK…ITEN), 2488–2551 (DTTS…VNNA), 2581–2638 (ARNR…STEI), 2665–2720 (AKNQ…IRTN), 2748–2804 (AKTA…VSDE), 2832–2888 (AYNQ…VNNA), 2918–2974 (AKEQ…ISNA), 3002–3058 (AYNQ…VTAA), 3088–3144 (AKQQ…ITNE), 3172–3228 (AYNQ…VAQA), 3258–3314 (AKNQ…ISDE), 3335–3398 (DTTE…VNNA), 3428–3484 (ARLN…ITTE), 3512–3567 (AKTA…IKTN), 3595–3650 (IKRQ…VKES), 3678–3733 (AKNR…IRQN), 3802–3860 (SMTA…IDQK), 3928–3983 (AMTQ…LDPA), 4056–4114 (AMQA…VNQK), 4182–4240 (SMGT…VDNA), 4308–4365 (AMHT…INQK), and 4433–4491 (VMEQ…IEQA). Positions 2495 to 2507 (EVRKLSRRGDTNN) are enriched in basic and acidic residues. Residues 2495-2514 (EVRKLSRRGDTNNKKPSSVS) are disordered. Residues 2925–2938 (AVDQVPSTEGMTQQ) show a composition bias toward polar residues. The interval 2925 to 2951 (AVDQVPSTEGMTQQTKDDYNSKQQAAQ) is disordered. A disordered region spans residues 4522–4542 (LSGLTNEQKPKENQAVNGAQT). One can recognise an FIVAR 30 domain in the interval 4559–4617 (SMQTLRDLVNNQNAIHSTSNYFNEDSTQKNTYDNAIDNGSTYITGQHNPELNKSTIDQT). A disordered region spans residues 4648–4671 (LGYLNDPQKSGEESLVNGSNTRSE). FIVAR domains follow at residues 4685 to 4743 (AMKQ…IEQK), 4811 to 4869 (AMQA…IEQA), 4937 to 4995 (AMSN…IEQA), 5063 to 5115 (AMEA…VLDK), 5189 to 5246 (AMLG…INQL), 5314 to 5372 (LMGA…VTTA), 5440 to 5498 (AMGE…IDQA), 5566 to 5624 (AMKK…ITNA), 5692 to 5750 (AMKQ…IADT), 5818 to 5875 (DMST…LQDL), 5943 to 6000 (AMKA…IKQA), 6068 to 6126 (KMEE…INRT), 6194 to 6252 (AMQQ…IQAI), and 6320 to 6378 (EMGT…IADA). The segment covering 5699–5712 (QVNQDDQISNSSPF) has biased composition (polar residues). The segment at 5699–5719 (QVNQDDQISNSSPFINEDSDK) is disordered. The disordered stretch occupies residues 6413–6434 (NNSQRQSEHDEINSAPSRTEVS). FIVAR domains lie at 6446-6504 (AMRQ…IEDA), 6572-6630 (AMKA…INRA), 6698-6755 (SMNQ…IDQA), 6823-6877 (TMKA…ANDE), 6949-7007 (AMKK…INTI), 7075-7133 (SMNT…VERA), 7201-7259 (DMKK…IENA), 7327-7384 (AMKH…IKQL), 7452-7510 (AMEN…IEHA), 7578-7636 (AMKA…INSI), 7704-7762 (AMET…VDIV), 7830-7888 (AMKS…VRQA), 7956-8010 (VMGK…TKQA), 8078-8137 (IMGE…IDTF), 8205-8264 (AMKS…IQGL), 8332-8391 (AMKD…VLGL), 8459-8518 (KMKL…IQHL), and 8587-8643 (AMQG…ANII). A helical membrane pass occupies residues 9306 to 9324 (TVGVITLTGLLSSFWLVLA). Composition is skewed to basic and acidic residues over residues 9363–9375 (DKEE…DKHS), 9386–9395 (EKQLSEEDIH), and 9404–9413 (QNSDNKDTKQ). Residues 9363–9439 (DKEEQIQNDD…VVKTKKRSKK (77 aa)) form a disordered region. A compositionally biased stretch (basic residues) spans 9414–9439 (KKVTSKKKKTPQSTKKVVKTKKRSKK).

The protein resides in the cell membrane. This Staphylococcus epidermidis (strain ATCC 35984 / DSM 28319 / BCRC 17069 / CCUG 31568 / BM 3577 / RP62A) protein is Extracellular matrix-binding protein ebh (ebh).